Here is a 340-residue protein sequence, read N- to C-terminus: Glycerol-3-phosphate dehydrogenase [NAD(P)+] (340 aa).

The NADPH site is built by Trp11, Arg33, and Lys110. Sn-glycerol 3-phosphate contacts are provided by Lys110, Gly144, and Ser146. Ala148 contributes to the NADPH binding site. Residues Lys199, Asp252, Ser262, Arg263, and Asn264 each coordinate sn-glycerol 3-phosphate. Lys199 serves as the catalytic Proton acceptor. Arg263 is an NADPH binding site. Positions 287 and 289 each coordinate NADPH.

It belongs to the NAD-dependent glycerol-3-phosphate dehydrogenase family.

The protein resides in the cytoplasm. The catalysed reaction is sn-glycerol 3-phosphate + NAD(+) = dihydroxyacetone phosphate + NADH + H(+). The enzyme catalyses sn-glycerol 3-phosphate + NADP(+) = dihydroxyacetone phosphate + NADPH + H(+). It functions in the pathway membrane lipid metabolism; glycerophospholipid metabolism. Functionally, catalyzes the reduction of the glycolytic intermediate dihydroxyacetone phosphate (DHAP) to sn-glycerol 3-phosphate (G3P), the key precursor for phospholipid synthesis. This chain is Glycerol-3-phosphate dehydrogenase [NAD(P)+], found in Polynucleobacter necessarius subsp. necessarius (strain STIR1).